The following is a 72-amino-acid chain: Cold shock-like protein CspD (72 aa).

Residues 4 to 64 (GIVKWFNNAK…SDKGSHATKI (61 aa)) form the CSD domain.

It is found in the cytoplasm. This Haemophilus influenzae (strain ATCC 51907 / DSM 11121 / KW20 / Rd) protein is Cold shock-like protein CspD (cspD).